The sequence spans 135 residues: Large ribosomal subunit protein eL27z (135 aa).

This sequence belongs to the eukaryotic ribosomal protein eL27 family.

The sequence is that of Large ribosomal subunit protein eL27z (RPL27A) from Arabidopsis thaliana (Mouse-ear cress).